Here is a 96-residue protein sequence, read N- to C-terminus: Co-chaperonin GroES (96 aa).

It belongs to the GroES chaperonin family. In terms of assembly, heptamer of 7 subunits arranged in a ring. Interacts with the chaperonin GroEL.

The protein resides in the cytoplasm. Its function is as follows. Together with the chaperonin GroEL, plays an essential role in assisting protein folding. The GroEL-GroES system forms a nano-cage that allows encapsulation of the non-native substrate proteins and provides a physical environment optimized to promote and accelerate protein folding. GroES binds to the apical surface of the GroEL ring, thereby capping the opening of the GroEL channel. The chain is Co-chaperonin GroES from Shewanella denitrificans (strain OS217 / ATCC BAA-1090 / DSM 15013).